Here is a 132-residue protein sequence, read N- to C-terminus: Large ribosomal subunit protein bL17 (132 aa).

The protein belongs to the bacterial ribosomal protein bL17 family. In terms of assembly, part of the 50S ribosomal subunit. Contacts protein L32.

The protein is Large ribosomal subunit protein bL17 of Ruthia magnifica subsp. Calyptogena magnifica.